A 335-amino-acid polypeptide reads, in one-letter code: Glycerol-3-phosphate dehydrogenase [NAD(P)+] (335 aa).

The NADPH site is built by Ser10, Phe11, Arg31, and Lys105. Sn-glycerol 3-phosphate-binding residues include Lys105, Gly136, and Ser138. Residue Ala140 participates in NADPH binding. Residues Lys191, Asp244, Ser254, Arg255, and Asn256 each contribute to the sn-glycerol 3-phosphate site. Lys191 serves as the catalytic Proton acceptor. Arg255 is an NADPH binding site. Residues Val279 and Glu281 each coordinate NADPH.

Belongs to the NAD-dependent glycerol-3-phosphate dehydrogenase family.

It is found in the cytoplasm. The enzyme catalyses sn-glycerol 3-phosphate + NAD(+) = dihydroxyacetone phosphate + NADH + H(+). The catalysed reaction is sn-glycerol 3-phosphate + NADP(+) = dihydroxyacetone phosphate + NADPH + H(+). It participates in membrane lipid metabolism; glycerophospholipid metabolism. Functionally, catalyzes the reduction of the glycolytic intermediate dihydroxyacetone phosphate (DHAP) to sn-glycerol 3-phosphate (G3P), the key precursor for phospholipid synthesis. In Leptospira borgpetersenii serovar Hardjo-bovis (strain JB197), this protein is Glycerol-3-phosphate dehydrogenase [NAD(P)+].